The following is a 632-amino-acid chain: tRNA endonuclease VMS1 (632 aa).

The C2H2-type zinc-finger motif lies at 72–96 (MRCSVCQMSFDSRNEQKAHYQTDYH). Positions 123–155 (HGIKSEDENSGGEQTSSDHEESEEASDRDPDLQ) are disordered. In terms of domain architecture, VLRF1 spans 232–392 (PMAISALFMV…KKAWCELSYL (161 aa)). The active site involves Gln-295. 2 ANK repeats span residues 470-500 (LTPT…DPTI) and 504-530 (LGRT…NLGE). Coiled-coil stretches lie at residues 544–582 (LSRE…QRFA) and 608–632 (TDEQ…KKKY). Over residues 578–589 (KQRFAKDAERGP) the composition is skewed to basic and acidic residues. Residues 578–632 (KQRFAKDAERGPGKKLTNIPSIQQQNLNSLTDEQRRRLMREQRARAAEERMKKKY) are disordered. The segment covering 595–608 (NIPSIQQQNLNSLT) has biased composition (polar residues). The segment covering 609 to 632 (DEQRRRLMREQRARAAEERMKKKY) has biased composition (basic and acidic residues).

It belongs to the ANKZF1/VMS1 family. In terms of assembly, associates with 60S ribosomal subunit. Interacts with CDC48. Interacts with NPL4.

It localises to the cytoplasm. The protein localises to the mitochondrion. Its subcellular location is the endoplasmic reticulum membrane. Its function is as follows. Endonuclease that cleaves polypeptidyl-tRNAs downstream of the ribosome-associated quality control (RQC) pathway to release incompletely synthesized polypeptides for degradation. The RQC pathway disassembles aberrantly stalled translation complexes to recycle or degrade the constituent parts. VMS1 acts downstream disassembly of stalled ribosomes and specifically cleaves off the terminal 3'-CCA nucleotides universal to all tRNAs from polypeptidyl-tRNAs, releasing (1) ubiquitinated polypeptides from 60S ribosomal subunit for degradation by the ERAD pathway and (2) cleaved tRNAs for recycling. Component of an evolutionarily conserved system for ubiquitin-mediated mitochondria-associated protein degradation (MAD), which is necessary to maintain mitochondrial, cellular, and organismal viability. In Saccharomyces cerevisiae (strain ATCC 204508 / S288c) (Baker's yeast), this protein is tRNA endonuclease VMS1.